A 64-amino-acid polypeptide reads, in one-letter code: Prokaryotic ubiquitin-like protein Pup (64 aa).

Residues 1-10 are compositionally biased toward polar residues; the sequence is MNQNGSQIHS. Residues 1–32 are disordered; that stretch reads MNQNGSQIHSDGNGHSDDTDTPGVSAGQVSVN. Positions 20-58 are ARC ATPase binding; sequence DTPGVSAGQVSVNTAGVDDLLDEIDGLLESNAEEFVRSY. Deamidated glutamine is present on Q64. An Isoglutamyl lysine isopeptide (Gln-Lys) (interchain with K-? in acceptor proteins) cross-link involves residue Q64.

The protein belongs to the prokaryotic ubiquitin-like protein family. As to quaternary structure, strongly interacts with the proteasome-associated ATPase ARC through a hydrophobic interface; the interacting region of Pup lies in its C-terminal half. There is one Pup binding site per ARC hexamer ring. In terms of processing, is modified by deamidation of its C-terminal glutamine to glutamate by the deamidase Dop, a prerequisite to the subsequent pupylation process.

The protein operates within protein degradation; proteasomal Pup-dependent pathway. Functionally, protein modifier that is covalently attached to lysine residues of substrate proteins, thereby targeting them for proteasomal degradation. The tagging system is termed pupylation. This Corynebacterium diphtheriae (strain ATCC 700971 / NCTC 13129 / Biotype gravis) protein is Prokaryotic ubiquitin-like protein Pup.